The chain runs to 486 residues: Probable glycine dehydrogenase (decarboxylating) subunit 2 (486 aa).

Lys273 is subject to N6-(pyridoxal phosphate)lysine.

This sequence belongs to the GcvP family. C-terminal subunit subfamily. In terms of assembly, the glycine cleavage system is composed of four proteins: P, T, L and H. In this organism, the P 'protein' is a heterodimer of two subunits. It depends on pyridoxal 5'-phosphate as a cofactor.

The enzyme catalyses N(6)-[(R)-lipoyl]-L-lysyl-[glycine-cleavage complex H protein] + glycine + H(+) = N(6)-[(R)-S(8)-aminomethyldihydrolipoyl]-L-lysyl-[glycine-cleavage complex H protein] + CO2. In terms of biological role, the glycine cleavage system catalyzes the degradation of glycine. The P protein binds the alpha-amino group of glycine through its pyridoxal phosphate cofactor; CO(2) is released and the remaining methylamine moiety is then transferred to the lipoamide cofactor of the H protein. The polypeptide is Probable glycine dehydrogenase (decarboxylating) subunit 2 (Alkaliphilus oremlandii (strain OhILAs) (Clostridium oremlandii (strain OhILAs))).